Consider the following 123-residue polypeptide: Ribosome-binding factor A (123 aa).

It belongs to the RbfA family. As to quaternary structure, monomer. Binds 30S ribosomal subunits, but not 50S ribosomal subunits or 70S ribosomes.

The protein localises to the cytoplasm. One of several proteins that assist in the late maturation steps of the functional core of the 30S ribosomal subunit. Associates with free 30S ribosomal subunits (but not with 30S subunits that are part of 70S ribosomes or polysomes). Required for efficient processing of 16S rRNA. May interact with the 5'-terminal helix region of 16S rRNA. In Neisseria meningitidis serogroup A / serotype 4A (strain DSM 15465 / Z2491), this protein is Ribosome-binding factor A.